Consider the following 64-residue polypeptide: Large ribosomal subunit protein uL29 (64 aa).

The protein belongs to the universal ribosomal protein uL29 family.

The sequence is that of Large ribosomal subunit protein uL29 from Legionella pneumophila (strain Lens).